A 238-amino-acid polypeptide reads, in one-letter code: Uridylate kinase (238 aa).

12–15 contacts ATP; sequence KLSG. Gly54 is a UMP binding site. ATP contacts are provided by Gly55 and Arg59. Residues Asp74 and 135–142 contribute to the UMP site; that span reads TGNPFFTT. ATP-binding residues include Thr162, Tyr168, and Asp171.

The protein belongs to the UMP kinase family. In terms of assembly, homohexamer.

The protein localises to the cytoplasm. It catalyses the reaction UMP + ATP = UDP + ADP. It functions in the pathway pyrimidine metabolism; CTP biosynthesis via de novo pathway; UDP from UMP (UMPK route): step 1/1. Inhibited by UTP. Its function is as follows. Catalyzes the reversible phosphorylation of UMP to UDP. This chain is Uridylate kinase, found in Methylobacillus flagellatus (strain ATCC 51484 / DSM 6875 / VKM B-1610 / KT).